The following is a 186-amino-acid chain: Elongation factor P (186 aa).

It belongs to the elongation factor P family.

It is found in the cytoplasm. It functions in the pathway protein biosynthesis; polypeptide chain elongation. Functionally, involved in peptide bond synthesis. Stimulates efficient translation and peptide-bond synthesis on native or reconstituted 70S ribosomes in vitro. Probably functions indirectly by altering the affinity of the ribosome for aminoacyl-tRNA, thus increasing their reactivity as acceptors for peptidyl transferase. This Shewanella piezotolerans (strain WP3 / JCM 13877) protein is Elongation factor P.